The following is a 307-amino-acid chain: Protoheme IX farnesyltransferase (307 aa).

The next 9 helical transmembrane spans lie at 33–53 (IGIV…AFYF), 62–82 (LHIV…SCSI), 111–131 (RVLW…LMTT), 132–152 (VTAA…YTLW), 159–179 (LNTV…WTAV), 185–205 (IVPL…FLAL), 229–249 (MTKR…FYLF), 251–271 (LGIP…LLGL), and 287–307 (FVYS…ATIW).

The protein belongs to the UbiA prenyltransferase family. Protoheme IX farnesyltransferase subfamily. As to quaternary structure, interacts with CtaA.

The protein localises to the cell membrane. It carries out the reaction heme b + (2E,6E)-farnesyl diphosphate + H2O = Fe(II)-heme o + diphosphate. It functions in the pathway porphyrin-containing compound metabolism; heme O biosynthesis; heme O from protoheme: step 1/1. Functionally, converts heme B (protoheme IX) to heme O by substitution of the vinyl group on carbon 2 of heme B porphyrin ring with a hydroxyethyl farnesyl side group. The sequence is that of Protoheme IX farnesyltransferase from Geobacillus thermodenitrificans (strain NG80-2).